The chain runs to 355 residues: Elongation factor Ts (355 aa).

Positions 82 to 85 (TDFV) are involved in Mg(2+) ion dislocation from EF-Tu.

This sequence belongs to the EF-Ts family.

It localises to the cytoplasm. In terms of biological role, associates with the EF-Tu.GDP complex and induces the exchange of GDP to GTP. It remains bound to the aminoacyl-tRNA.EF-Tu.GTP complex up to the GTP hydrolysis stage on the ribosome. The chain is Elongation factor Ts (tsf) from Helicobacter pylori (strain J99 / ATCC 700824) (Campylobacter pylori J99).